The sequence spans 864 residues: Dynamin-1 (864 aa).

Positions 28 to 294 constitute a Dynamin-type G domain; sequence DLDLPQIAVV…LTNHIRDTLP (267 aa). The tract at residues 38–45 is G1 motif; that stretch reads GGQSAGKS. The GDP site is built by Ser41, Gly43, Lys44, Ser45, Ser46, Arg59, and Gly60. The tract at residues 64–66 is G2 motif; the sequence is VTR. Position 80 is a phosphotyrosine (Tyr80). A 3'-nitrotyrosine; alternate modification is found at Tyr125. Tyr125 is subject to Phosphotyrosine; alternate. Residues 136-139 form a G3 motif region; sequence DLPG. Residues 205 to 208 are G4 motif; the sequence is TKLD. GDP is bound by residues Lys206, Asp208, Asp211, Asn236, Arg237, and Gln239. Residues 235–238 form a G5 motif region; the sequence is VNRS. Phosphoserine is present on residues Ser306 and Ser347. Tyr354 carries the post-translational modification Phosphotyrosine. Ser512 is modified (phosphoserine). The region spanning 519–625 is the PH domain; the sequence is LVIRKGWLTI…WKASFLRAGV (107 aa). The 92-residue stretch at 659-750 folds into the GED domain; that stretch reads VETIRNLVDS…IIGDINTTTV (92 aa). Residues 767–864 form a disordered region; sequence SVPAGRRSPT…PESPRPPFDL (98 aa). Ser774 carries the phosphoserine; by CDK5 modification. Ser778 is modified (phosphoserine). Position 796 is an omega-N-methylarginine (Arg796). Ser822 carries the post-translational modification Phosphoserine. The segment covering 825–843 has biased composition (pro residues); that stretch reads PFGPPPQVPSRPNRAPPGV. 2 positions are modified to phosphoserine: Ser851 and Ser857.

This sequence belongs to the TRAFAC class dynamin-like GTPase superfamily. Dynamin/Fzo/YdjA family. Homodimer; homodimerization is mediated by the dynamin-type G domain which promotes assembly-stimulated GTPase activity. Homo-tetramer formed from two dimers in the absence of lipid. Oligomerizes into a helical polymer that self-assembles around the vesicle membrane, when associated to the menbrane through lipid binding. Interacts (via C-terminal proline-rich domain (PRD)) with SNX9 (via SH3 domain); this interaction allows regulation of DNM1 self-assembly during late stages of endocytic vesicle formation and supports DNM1's early functions in accelerating clathrin-coated pits (CCPs) maturation in non neuronals cell. Interacts (via C-terminal proline-rich domain (PRD)) with MYO1E (via SH3 domain); this interaction regulates receptor-mediated endocytosis. Interacts with SNX33 (via SH3 domain); this interaction decreases DNM1-dependent endocytosis. Interacts with DIAPH1. Interacts with GRB2 (via SH3 domain); this interaction mediates disassembly of DNM1 polymers, therefore modulates self-assembly. Forms a complex with BIN1 (via SH3 domain) and SH3GL2 (via SH3 domain). Forms a complex with SH3GL2 (via SH3 domain) and AMPH (via SH3 domain). Forms a complex with SH3GL2 (via SH3 domain) and SYNJ1. Interacts with AMPH. Interacts (via C-terminal proline-rich domain (PRD)) with SYT1; this interaction facilitates vesicle fission during clathrin-mediated endocytosis (CME). Interacts (via C-terminal proline-rich domain (PRD)) with PLCG1 (via SH3 domain); this interaction stimulates the release of GDP from DNM1 and enhances DNM1-dependent endocytosis. Interacts with SNPH; this interaction inhibits the binding of DNM1 to AMPH and DNM1-receptor-mediated endocytosis. Interacts with CAV1. Interacts with SH3GLB1 (via SH3 domain). Interacts with PACSIN1 (via SH3 domain), PACSIN2 (via SH3 domain) and PACSIN3 (via SH3 domain). Interacts with UNC119; this interaction decreases DNM1's GTPase activity and affects DNM1's interaction with AMPH. Interacts (GTP-bound form) with DNAJC6; this interaction allows clathrin-coated vesicle (CCV) formation at the plasma membrane. Post-translationally, phosphorylation at Ser-774 by GSK3B/GSK3-beta leads to inactivation of receptor-mediated endocytosis in non-neuronal cells. Dephosphorylation at Ser-774, through the EGFR downstream signaling, leads to activation and regulates early stages of clathrin-mediated endocytosis (CME). Phosphorylated by CDK5 leading to synaptic vesicle endocytosis (SVE) activation. In terms of tissue distribution, brain-specific (peripheral sensory neurons).

The protein localises to the cytoplasmic vesicle. Its subcellular location is the clathrin-coated vesicle. It localises to the golgi apparatus. The protein resides in the cell membrane. It is found in the membrane. The protein localises to the clathrin-coated pit. Its subcellular location is the presynapse. It localises to the secretory vesicle. The protein resides in the chromaffin granule. It carries out the reaction GTP + H2O = GDP + phosphate + H(+). Catalyzes the hydrolysis of GTP and utilizes this energy to mediate vesicle scission and participates in many forms of endocytosis, such as clathrin-mediated endocytosis or synaptic vesicle endocytosis as well as rapid endocytosis (RE). Associates to the membrane, through lipid binding, and self-assembles into rings and stacks of interconnected rings through oligomerization to form a helical polymer around the vesicle membrane leading to constriction of invaginated coated pits around their necks. Self-assembly of the helical polymer induces membrane tubules narrowing until the polymer reaches a length sufficient to trigger GTP hydrolysis. Depending on the curvature imposed on the tubules, membrane detachment from the helical polymer upon GTP hydrolysis can cause spontaneous hemifission followed by complete fission. May play a role in regulating early stages of clathrin-mediated endocytosis in non-neuronal cells through its activation by dephosphorylation via the signaling downstream of EGFR. Controls vesicle size at a step before fission, during formation of membrane pits, at hippocampal synapses. Controls plastic adaptation of the synaptic vesicle recycling machinery to high levels of activity. Mediates rapid endocytosis (RE), a Ca(2+)-dependent and clathrin- and K(+)-independent process in chromaffin cells. Microtubule-associated force-producing protein involved in producing microtubule bundles and able to bind and hydrolyze GTP. Through its interaction with DNAJC6, acts during the early steps of clathrin-coated vesicle (CCV) formation. The protein is Dynamin-1 (Dnm1) of Rattus norvegicus (Rat).